A 385-amino-acid chain; its full sequence is S-type anion channel SLAH1 (385 aa).

The Cytoplasmic segment spans residues 1–42 (MEIPRQEIHIEIDNSIPSSKEFKTGLADAKPVVLMSALRSLH). The chain crosses the membrane as a helical span at residues 43–65 (AGYFRISLSLCSQALLWKIMIAP). Topologically, residues 66-81 (ESPSMSHMHSKLPSMA) are extracellular. A helical membrane pass occupies residues 82–102 (FHLLWYLALVTQVSLCFLYAL). Over 103 to 114 (KCIFFFDKVKEE) the chain is Cytoplasmic. Residues 115–135 (FLHYIGVNYLYAPSISWLLML) form a helical membrane-spanning segment. Residues 136–150 (QSAPMMEPNSVLYQT) lie on the Extracellular side of the membrane. The chain crosses the membrane as a helical span at residues 151–171 (LFWIFAVPVLTLDIKLYGQWF). The Cytoplasmic portion of the chain corresponds to 172–176 (TTEKR). The chain crosses the membrane as a helical span at residues 177 to 197 (FLSMLANPASQVSVIANLVAA). The Extracellular segment spans residues 198-207 (RGAAEMGWNE). The chain crosses the membrane as a helical span at residues 208 to 228 (CALCMFSLGMVHYLVIFVTLY). At 229 to 243 (QRLPGGNNFPAKLRP) the chain is on the cytoplasmic side. The chain crosses the membrane as a helical span at residues 244–264 (IFFLFVAAPAMASLAWNSICG). A topological domain (extracellular) is located at residue T265. Residues 266 to 286 (FDAVAKMLFFLSLFIFMSLVC) form a helical membrane-spanning segment. Topologically, residues 287-299 (RPNLFKKSMKRFN) are cytoplasmic. A helical membrane pass occupies residues 300-320 (VAWWAYSFPLTFLALDSVQYA). Topologically, residues 321–330 (QEVKDPVGSG) are extracellular. Residues 331–351 (LMLIFSSISVLIFLGMMVLTA) form a helical membrane-spanning segment. Residues 352–385 (ANSNRLLRHDPVLGSATDPKDKQKTLSLNATNQN) are Cytoplasmic-facing. Positions 366-385 (SATDPKDKQKTLSLNATNQN) are disordered. The segment covering 376 to 385 (TLSLNATNQN) has biased composition (polar residues).

This sequence belongs to the SLAC1 S-type anion channel family. Homotrimer. Expressed in the vascular systems of root.

Its subcellular location is the cell membrane. Slow, weak voltage-dependent S-type anion efflux channel involved in maintenance of anion homeostasis. In Arabidopsis thaliana (Mouse-ear cress), this protein is S-type anion channel SLAH1 (SLAH1).